The chain runs to 501 residues: 2-isopropylmalate synthase (501 aa).

In terms of domain architecture, Pyruvate carboxyltransferase spans 7 to 269 (VRIFDTTLRD…QTQIKTEEIA (263 aa)). Mn(2+) contacts are provided by Asp16, His204, His206, and Asn240. The tract at residues 394-501 (QLEGFTVSTG…RAYISALNRL (108 aa)) is regulatory domain.

It belongs to the alpha-IPM synthase/homocitrate synthase family. LeuA type 1 subfamily. In terms of assembly, homodimer. The cofactor is Mn(2+).

The protein resides in the cytoplasm. It catalyses the reaction 3-methyl-2-oxobutanoate + acetyl-CoA + H2O = (2S)-2-isopropylmalate + CoA + H(+). Its pathway is amino-acid biosynthesis; L-leucine biosynthesis; L-leucine from 3-methyl-2-oxobutanoate: step 1/4. Functionally, catalyzes the condensation of the acetyl group of acetyl-CoA with 3-methyl-2-oxobutanoate (2-ketoisovalerate) to form 3-carboxy-3-hydroxy-4-methylpentanoate (2-isopropylmalate). The chain is 2-isopropylmalate synthase from Leptospira interrogans serogroup Icterohaemorrhagiae serovar copenhageni (strain Fiocruz L1-130).